Here is a 232-residue protein sequence, read N- to C-terminus: MSNVDRAEIAKFEALAHRWWDRESEFKPLHDINPLRVNWIDERANLAGKKVLDVGCGGGILSEAMALRGATVTGIDMGEAPLAVAQLHQLESGVSVEYRQITAEDLAEEMPEQFDVVTCLEMLEHVPDPSSVIRACHRMVKPGGQVFFSTINRNPKAYLFAVVGAEYILNLLPRGTHDFKKFIRPSELGAWSRDAGLQVKDIIGLTYNPLTKHYKLASDVDVNYMIQTLREA.

4 residues coordinate S-adenosyl-L-methionine: R36, G55, D76, and L120.

Belongs to the methyltransferase superfamily. UbiG/COQ3 family.

It carries out the reaction a 3-demethylubiquinol + S-adenosyl-L-methionine = a ubiquinol + S-adenosyl-L-homocysteine + H(+). The enzyme catalyses a 3-(all-trans-polyprenyl)benzene-1,2-diol + S-adenosyl-L-methionine = a 2-methoxy-6-(all-trans-polyprenyl)phenol + S-adenosyl-L-homocysteine + H(+). Its pathway is cofactor biosynthesis; ubiquinone biosynthesis. In terms of biological role, O-methyltransferase that catalyzes the 2 O-methylation steps in the ubiquinone biosynthetic pathway. This Pseudomonas syringae pv. tomato (strain ATCC BAA-871 / DC3000) protein is Ubiquinone biosynthesis O-methyltransferase.